The primary structure comprises 369 residues: MTAMTVPPSLLPLEPFPTAPDTRASTPHIRLHGLGKRYPGGVQALREIDLEIRRGEVFGIIGRSGAGKSSLIRTLNRLERPSEGQVLIDDEDIGGYDGQRLVALRRRIGMIFQHFNLMSAKTVRQNIALPLRVAGVPRARIEERVAGLLQLVGLEEKRDAYPAQLSGGQKQRVGIARALVHQPQILLCDEATSALDPESTQAILALLRDINRRLGLTIVLITHEMAVIREICDRVVVLECGRIVEQGEVWEVFGDPRHAVTRSLLGSLRAALPADLQARLRQAPGAGDPVLLDLQYTGASRRVPDLLAIARAIGQRVDLLHGGIERIQGRALGRLLLQVGAPPGELPGVLAKAALVADKVEVLGHVAHA.

The region spanning 29-265 (IRLHGLGKRY…PRHAVTRSLL (237 aa)) is the ABC transporter domain. 62 to 69 (GRSGAGKS) lines the ATP pocket.

This sequence belongs to the ABC transporter superfamily. Methionine importer (TC 3.A.1.24) family. The complex is composed of two ATP-binding proteins (MetN), two transmembrane proteins (MetI) and a solute-binding protein (MetQ).

The protein resides in the cell inner membrane. The enzyme catalyses L-methionine(out) + ATP + H2O = L-methionine(in) + ADP + phosphate + H(+). It catalyses the reaction D-methionine(out) + ATP + H2O = D-methionine(in) + ADP + phosphate + H(+). Functionally, part of the ABC transporter complex MetNIQ involved in methionine import. Responsible for energy coupling to the transport system. This chain is Methionine import ATP-binding protein MetN 1, found in Pseudomonas aeruginosa (strain ATCC 15692 / DSM 22644 / CIP 104116 / JCM 14847 / LMG 12228 / 1C / PRS 101 / PAO1).